The sequence spans 283 residues: MKQYLELCQRIIDEGTWVENSRTGKRCLTVINADLVYHVDKNEFPLITTRKSFWKAAIAEMLGYIRGYDNAADFRNIGAKTWDANANDNQAWLNNPHRKGADDMGRVYGVQGRGWSKPDGGSIDQLRKIVDNLSKGIDDRGEILSFYNPGEFHMGCLRPCMHTHNFSLLGDTLHLTSFQRSCDVPLGLNFNQVQVFTLLALIAQITGHKAGTAYHKIVNAHIYEDQLELMQSVQLKRSPFPSPQLSINPDIKSLEDLETWVTMDDFEVTGYEHHEGIRYPFSV.

R22 provides a ligand contact to dUMP. The active-site Nucleophile is the C160. DUMP-binding positions include 180–183, N191, and 221–223; these read RSCD and HIY. D183 is a (6R)-5,10-methylene-5,6,7,8-tetrahydrofolate binding site. Residue S282 coordinates (6R)-5,10-methylene-5,6,7,8-tetrahydrofolate.

It belongs to the thymidylate synthase family. Bacterial-type ThyA subfamily. Homodimer.

It is found in the cytoplasm. The enzyme catalyses dUMP + (6R)-5,10-methylene-5,6,7,8-tetrahydrofolate = 7,8-dihydrofolate + dTMP. It functions in the pathway pyrimidine metabolism; dTTP biosynthesis. In terms of biological role, catalyzes the reductive methylation of 2'-deoxyuridine-5'-monophosphate (dUMP) to 2'-deoxythymidine-5'-monophosphate (dTMP) while utilizing 5,10-methylenetetrahydrofolate (mTHF) as the methyl donor and reductant in the reaction, yielding dihydrofolate (DHF) as a by-product. This enzymatic reaction provides an intracellular de novo source of dTMP, an essential precursor for DNA biosynthesis. The chain is Thymidylate synthase from Shewanella piezotolerans (strain WP3 / JCM 13877).